A 489-amino-acid chain; its full sequence is MGNVPGKIDQEDSFNDVRPDSSYNTTSSNSVIKQYDEEASSRVRTRRTTSLVNNILNGNNARTKTGSHLSSTSRRKTSREKELAKEAHAKQLVVRCSETVDGGFLAPFGCYSFEKLDYDATVVKNLIIKRKLAPFYTPLQDFDESWTRDELIKIVDGLPLHDTFDENLEEFEDVPIGNLRKSTFNELIDKSLSKKEQRRMHAKIFRARLYKKRILWQENENETFLERKLEMKRIGSKSSNVEDNTSSQPRKNYHLPSDDLKYTLYKNGSECPICFLYFPGPFNYSKCCQQPICTECFVQIKRADPHFPHDEVDPTEPQTNDSEKDPNLLTSEPANCPYCATASFSITYQPPTNRETGIGGMPADSYVYKDAAISRADGGQPNISAITSDTIRPDWEIKLNKERARLMRRSANATAIHISNRLIDPSHSRRRNTSHSITPIHDESTSASRSPEPTINELEDQMVREAIRLSLEDQDNRKKSKNRNTSLRP.

Residues 1 to 84 (MGNVPGKIDQ…RKTSREKELA (84 aa)) are disordered. Residue S13 is modified to Phosphoserine. Composition is skewed to polar residues over residues 21-32 (SSYNTTSSNSVI) and 51-69 (LVNN…GSHL). Phosphothreonine is present on residues T183 and T433. The interval 419-489 (SNRLIDPSHS…SKNRNTSLRP (71 aa)) is disordered. S436 bears the Phosphoserine mark. Residue T438 is modified to Phosphothreonine. Residues 461 to 477 (QMVREAIRLSLEDQDNR) are compositionally biased toward basic and acidic residues.

This sequence belongs to the SIP5 family. Interacts with NPA1, SNF1 and REG1.

The protein resides in the cytoplasm. Functionally, may negatively regulate the SNF1 kinase by promoting the interaction of the REG1/GLC7 phosphatase complex with the kinase. Deletion of SIP5 promotes resistance to artemisinin, which is probably an indirect effect of an action on the electron transport chain. The polypeptide is Protein SIP5 (SIP5) (Saccharomyces cerevisiae (strain ATCC 204508 / S288c) (Baker's yeast)).